The primary structure comprises 1254 residues: Juxtamembrane domain-associated catenin (1254 aa).

3 disordered regions span residues 1–38 (MISS…TMRK), 84–106 (AGPT…DNPP), and 145–209 (PYSN…SAPG). Residues 12 to 22 (PIPEEGTEADG) are compositionally biased toward acidic residues. Residues 145 to 157 (PYSNIDFDSSGLP) are compositionally biased toward polar residues. Fibronectin type-III domains are found at residues 207 to 302 (APGV…IPIS), 315 to 411 (APGR…IRPA), 428 to 518 (PPGQ…LRPT), and 530 to 624 (ILEA…IEPS). The tract at residues 412-433 (APQRHVPARKVSESVQPPGQPQ) is disordered. Positions 662 to 685 (MVRESPPLPERDDSPPPLRRANNN) are disordered. ARM repeat units follow at residues 733 to 775 (GGIP…AVME), 777 to 820 (DGVR…ESAT), 874 to 922 (NLIE…YDPA), 969 to 1012 (HVVK…RAAV), and 1016 to 1058 (KGLP…KYAL). The segment at 920–960 (DPAAAHSSSSKNMKHVASPKPEKKKKDKEKKKDKNPKNIVT) is disordered. Residues 1159-1254 (GTARRGDSST…GGGNIDDSWV (96 aa)) form a disordered region. Residues 1166–1176 (SSTLARPISSQ) show a composition bias toward polar residues. The span at 1177-1187 (GRERPSMHQLD) shows a compositional bias: basic and acidic residues.

It belongs to the beta-catenin family. In terms of assembly, associated with the catenin-cadherin complex consisting of hmr-1, hmp-1 and hmp-2. Interacts with hmr-1. Interacts with picc-1. In terms of tissue distribution, epidermal cells.

The protein localises to the cell junction. It localises to the adherens junction. Its subcellular location is the nucleus. Functionally, may act as a positive modulator of hmr-1 function during epidermal morphogenesis. Required for proper localization of other junctional components, such as pac-1. This chain is Juxtamembrane domain-associated catenin (jac-1), found in Caenorhabditis elegans.